A 196-amino-acid chain; its full sequence is Gastrula zinc finger protein XlCGF8.2DB (196 aa).

7 consecutive C2H2-type zinc fingers follow at residues 6-28, 34-56, 62-84, 90-112, 118-140, 146-168, and 174-196; these read FTCKECGKGFTQKRNLASHMTIH, FSCTECGKGFTQKRNLASHLTIH, FPCTECGKGFTQKSNLVSHMKIH, FTCTECGKEFAHKHRLLGHLKIH, FSCTECGKHFAHKYHLVSHMKIH, FTCTECGEHFANKVSLLGHLKMH, and FTCTECGNSFTQVSSLVSHMKIH.

The protein belongs to the krueppel C2H2-type zinc-finger protein family.

It localises to the nucleus. In terms of biological role, may be involved in transcriptional regulation. This Xenopus laevis (African clawed frog) protein is Gastrula zinc finger protein XlCGF8.2DB.